A 121-amino-acid polypeptide reads, in one-letter code: Amelogenin (121 aa).

The segment at 1–121 is disordered; it reads LHHQIIPVLS…DLPLEPWPAS (121 aa). Composition is skewed to polar residues over residues 10–19 and 47–59; these read SQHQTPTHAL and HSVTPTQHHQSNL. Over residues 60–84 the composition is skewed to low complexity; sequence PQPGQQPFQPQFPQKPTHRPIQPQA. Residues 85 to 121 show a composition bias toward pro residues; that stretch reads PVHPMPPMPQPQLPPMFPLQPLPPLLPDLPLEPWPAS.

Belongs to the amelogenin family.

Its subcellular location is the secreted. It is found in the extracellular space. The protein resides in the extracellular matrix. Its function is as follows. Plays a role in the biomineralization of teeth. Seems to regulate the formation of crystallites during the secretory stage of tooth enamel development. Thought to play a major role in the structural organization and mineralization of developing enamel. This is Amelogenin (AMEL) from Tachyglossus aculeatus aculeatus (Southeast Australian short-beaked echidna).